The chain runs to 300 residues: Ribosomal RNA small subunit methyltransferase H (300 aa).

Residues 46–48, Asp-65, Phe-92, Asp-107, and Gln-114 contribute to the S-adenosyl-L-methionine site; that span reads GGH.

The protein belongs to the methyltransferase superfamily. RsmH family.

It localises to the cytoplasm. It catalyses the reaction cytidine(1402) in 16S rRNA + S-adenosyl-L-methionine = N(4)-methylcytidine(1402) in 16S rRNA + S-adenosyl-L-homocysteine + H(+). Functionally, specifically methylates the N4 position of cytidine in position 1402 (C1402) of 16S rRNA. This is Ribosomal RNA small subunit methyltransferase H from Prochlorococcus marinus (strain MIT 9215).